The sequence spans 804 residues: Leucine--tRNA ligase (804 aa).

A 'HIGH' region motif is present at residues proline 39 to histidine 50. The short motif at lysine 580–serine 584 is the 'KMSKS' region element. Lysine 583 contributes to the ATP binding site.

This sequence belongs to the class-I aminoacyl-tRNA synthetase family.

It localises to the cytoplasm. It carries out the reaction tRNA(Leu) + L-leucine + ATP = L-leucyl-tRNA(Leu) + AMP + diphosphate. The protein is Leucine--tRNA ligase of Mycoplasma capricolum subsp. capricolum (strain California kid / ATCC 27343 / NCTC 10154).